We begin with the raw amino-acid sequence, 132 residues long: Fatty acid-binding protein, brain (132 aa).

Val-2 carries the N-acetylvaline modification. Arg-127–Tyr-129 serves as a coordination point for a fatty acid.

The protein belongs to the calycin superfamily. Fatty-acid binding protein (FABP) family. In terms of tissue distribution, expressed in brain and other neural tissues.

It is found in the cytoplasm. In terms of biological role, B-FABP could be involved in the transport of a so far unknown hydrophobic ligand with potential morphogenic activity during CNS development. It is required for the establishment of the radial glial fiber system in developing brain, a system that is necessary for the migration of immature neurons to establish cortical layers. This chain is Fatty acid-binding protein, brain (Fabp7), found in Mus musculus (Mouse).